Reading from the N-terminus, the 332-residue chain is NADH-quinone oxidoreductase subunit H (332 aa).

Helical transmembrane passes span Phe-4–Ser-24, Ile-44–Leu-64, Phe-78–Ile-98, Val-120–Gly-140, Val-165–Ile-185, Phe-194–Ile-214, Ile-255–Ile-275, Ile-279–Phe-299, and Tyr-312–Leu-332.

Belongs to the complex I subunit 1 family. In terms of assembly, NDH-1 is composed of 14 different subunits. Subunits NuoA, H, J, K, L, M, N constitute the membrane sector of the complex.

The protein resides in the cell inner membrane. The enzyme catalyses a quinone + NADH + 5 H(+)(in) = a quinol + NAD(+) + 4 H(+)(out). In terms of biological role, NDH-1 shuttles electrons from NADH, via FMN and iron-sulfur (Fe-S) centers, to quinones in the respiratory chain. The immediate electron acceptor for the enzyme in this species is believed to be ubiquinone. Couples the redox reaction to proton translocation (for every two electrons transferred, four hydrogen ions are translocated across the cytoplasmic membrane), and thus conserves the redox energy in a proton gradient. This subunit may bind ubiquinone. The protein is NADH-quinone oxidoreductase subunit H of Campylobacter jejuni subsp. jejuni serotype O:2 (strain ATCC 700819 / NCTC 11168).